Consider the following 101-residue polypeptide: Urease subunit gamma (101 aa).

It belongs to the urease gamma subunit family. In terms of assembly, heterotrimer of UreA (gamma), UreB (beta) and UreC (alpha) subunits. Three heterotrimers associate to form the active enzyme.

It localises to the cytoplasm. The catalysed reaction is urea + 2 H2O + H(+) = hydrogencarbonate + 2 NH4(+). It participates in nitrogen metabolism; urea degradation; CO(2) and NH(3) from urea (urease route): step 1/1. The sequence is that of Urease subunit gamma from Ureaplasma parvum serovar 3 (strain ATCC 27815 / 27 / NCTC 11736).